Here is a 141-residue protein sequence, read N- to C-terminus: Hemoglobin subunit alpha (141 aa).

Positions 1–141 (VLSPADKTNV…VSTVLTSKYR (141 aa)) constitute a Globin domain. Position 3 is a phosphoserine (Ser-3). N6-succinyllysine is present on Lys-7. Thr-8 is modified (phosphothreonine). Lys-11 is subject to N6-succinyllysine. The residue at position 35 (Ser-35) is a Phosphoserine. The residue at position 40 (Lys-40) is an N6-succinyllysine. Ser-49 is subject to Phosphoserine. Residue His-58 participates in O2 binding. His-87 is a binding site for heme b. Ser-102 bears the Phosphoserine mark. A Phosphothreonine modification is found at Thr-108. Ser-124 carries the phosphoserine modification. A phosphothreonine mark is found at Thr-134 and Thr-137. Ser-138 bears the Phosphoserine mark.

This sequence belongs to the globin family. Heterotetramer of two alpha chains and two beta chains. As to expression, red blood cells.

Functionally, involved in oxygen transport from the lung to the various peripheral tissues. In terms of biological role, hemopressin acts as an antagonist peptide of the cannabinoid receptor CNR1. Hemopressin-binding efficiently blocks cannabinoid receptor CNR1 and subsequent signaling. The chain is Hemoglobin subunit alpha (HBA) from Eulemur fulvus fulvus (Brown lemur).